Reading from the N-terminus, the 99-residue chain is Ribonuclease P protein component 1 (99 aa).

Belongs to the eukaryotic/archaeal RNase P protein component 1 family. Consists of a catalytic RNA component and at least 4-5 protein subunits.

It localises to the cytoplasm. The enzyme catalyses Endonucleolytic cleavage of RNA, removing 5'-extranucleotides from tRNA precursor.. Its function is as follows. Part of ribonuclease P, a protein complex that generates mature tRNA molecules by cleaving their 5'-ends. In Methanococcus vannielii, this protein is Ribonuclease P protein component 1.